Consider the following 375-residue polypeptide: 4-hydroxy-3-methylbut-2-en-1-yl diphosphate synthase (flavodoxin) (375 aa).

The [4Fe-4S] cluster site is built by Cys270, Cys273, Cys305, and Glu312.

It belongs to the IspG family. [4Fe-4S] cluster is required as a cofactor.

It carries out the reaction (2E)-4-hydroxy-3-methylbut-2-enyl diphosphate + oxidized [flavodoxin] + H2O + 2 H(+) = 2-C-methyl-D-erythritol 2,4-cyclic diphosphate + reduced [flavodoxin]. It functions in the pathway isoprenoid biosynthesis; isopentenyl diphosphate biosynthesis via DXP pathway; isopentenyl diphosphate from 1-deoxy-D-xylulose 5-phosphate: step 5/6. In terms of biological role, converts 2C-methyl-D-erythritol 2,4-cyclodiphosphate (ME-2,4cPP) into 1-hydroxy-2-methyl-2-(E)-butenyl 4-diphosphate. The protein is 4-hydroxy-3-methylbut-2-en-1-yl diphosphate synthase (flavodoxin) of Yersinia pseudotuberculosis serotype IB (strain PB1/+).